We begin with the raw amino-acid sequence, 468 residues long: DNA methyltransferase 1-associated protein 1 (468 aa).

Composition is skewed to basic and acidic residues over residues 1-11 (MATGADVRDIL) and 26-48 (SKKD…LTFK). The tract at residues 1-48 (MATGADVRDILELGGPEGDAASGTISKKDIINPDKKKSKKSSETLTFK) is disordered. A Glycyl lysine isopeptide (Lys-Gly) (interchain with G-Cter in SUMO2) cross-link involves residue lysine 27. The region spanning 149-199 (DDAWTKAETDHLFDLSRRFDLRFVVIHDRYDHQQFKKRSVEDLKERYYHIC) is the SANT domain. Residue lysine 214 forms a Glycyl lysine isopeptide (Lys-Gly) (interchain with G-Cter in SUMO2) linkage. Residues 225-275 (RRKEQLERLYNRTPEQVAEEEYLLQELRKIEARKKEREKRSQDLQKLITAA) are a coiled coil. Over residues 258–267 (KKEREKRSQD) the composition is skewed to basic and acidic residues. Disordered regions lie at residues 258–305 (KKER…PAVP) and 411–468 (AVGP…AKKP). Phosphothreonine is present on threonine 446. Serine 449 is subject to Phosphoserine.

In terms of assembly, component of the NuA4 histone acetyltransferase complex which contains the catalytic subunit KAT5/TIP60 and the subunits EP400, TRRAP/PAF400, BRD8/SMAP, EPC1, DMAP1/DNMAP1, RUVBL1/TIP49, RUVBL2, ING3, actin, ACTL6A/BAF53A, MORF4L1/MRG15, MORF4L2/MRGX, MRGBP, YEATS4/GAS41, VPS72/YL1 and MEAF6. Component of a NuA4-related complex which contains EP400, TRRAP/PAF400, SRCAP, BRD8/SMAP, EPC1, DMAP1/DNMAP1, RUVBL1/TIP49, RUVBL2, actin, ACTL6A/BAF53A, VPS72 and YEATS4/GAS41. DMAP1 also forms a complex with DNMT1 and HDAC2. Throughout S phase it interacts directly with the N-terminus of DNMT1, which serves to recruit DMAP1 to replication foci. DMAP1 interacts with ING1, a component of the mSIN3A transcription repressor complex, although this interaction is not required for recruitment of ING1 to heterochromatin. Interacts directly with the transcriptional corepressor TSG101. Interacts with URI1. Interacts with the pro-apoptotic protein DAXX.

The protein resides in the nucleus. Its subcellular location is the cytoplasm. Involved in transcription repression and activation. Its interaction with HDAC2 may provide a mechanism for histone deacetylation in heterochromatin following replication of DNA at late firing origins. Can also repress transcription independently of histone deacetylase activity. May specifically potentiate DAXX-mediated repression of glucocorticoid receptor-dependent transcription. Component of the NuA4 histone acetyltransferase (HAT) complex which is involved in transcriptional activation of select genes principally by acetylation of nucleosomal histones H4 and H2A. This modification may both alter nucleosome - DNA interactions and promote interaction of the modified histones with other proteins which positively regulate transcription. This complex may be required for the activation of transcriptional programs associated with oncogene and proto-oncogene mediated growth induction, tumor suppressor mediated growth arrest and replicative senescence, apoptosis, and DNA repair. NuA4 may also play a direct role in DNA repair when recruited to sites of DNA damage. Participates in the nuclear localization of URI1 and increases its transcriptional corepressor activity. The chain is DNA methyltransferase 1-associated protein 1 (Dmap1) from Mus musculus (Mouse).